The primary structure comprises 445 residues: N-succinylarginine dihydrolase (445 aa).

Substrate-binding positions include 19–28 (AGLSYGNVAS), Asn110, and 137–138 (HR). Glu174 is a catalytic residue. Arg214 is a binding site for substrate. The active site involves His250. The substrate site is built by Asp252 and Asn363. Cys369 (nucleophile) is an active-site residue.

It belongs to the succinylarginine dihydrolase family. Homodimer.

It carries out the reaction N(2)-succinyl-L-arginine + 2 H2O + 2 H(+) = N(2)-succinyl-L-ornithine + 2 NH4(+) + CO2. Its pathway is amino-acid degradation; L-arginine degradation via AST pathway; L-glutamate and succinate from L-arginine: step 2/5. Its function is as follows. Catalyzes the hydrolysis of N(2)-succinylarginine into N(2)-succinylornithine, ammonia and CO(2). This Shewanella loihica (strain ATCC BAA-1088 / PV-4) protein is N-succinylarginine dihydrolase.